A 451-amino-acid polypeptide reads, in one-letter code: Tol-Pal system protein TolB 1 (451 aa).

The first 19 residues, Met1–Ala19, serve as a signal peptide directing secretion. Over residues Gln18–Glu29 the composition is skewed to low complexity. Disordered regions lie at residues Gln18–Ser37 and Asn431–Pro451.

The protein belongs to the TolB family. In terms of assembly, the Tol-Pal system is composed of five core proteins: the inner membrane proteins TolA, TolQ and TolR, the periplasmic protein TolB and the outer membrane protein Pal. They form a network linking the inner and outer membranes and the peptidoglycan layer.

It localises to the periplasm. Functionally, part of the Tol-Pal system, which plays a role in outer membrane invagination during cell division and is important for maintaining outer membrane integrity. This Novosphingobium aromaticivorans (strain ATCC 700278 / DSM 12444 / CCUG 56034 / CIP 105152 / NBRC 16084 / F199) protein is Tol-Pal system protein TolB 1.